The sequence spans 528 residues: Probable feruloyl esterase B-1 (528 aa).

Positions 1 to 19 (MMWWFLLIGLASAAATASS) are cleaved as a signal peptide. 6 disulfides stabilise this stretch: cysteine 29-cysteine 78, cysteine 64-cysteine 117, cysteine 190-cysteine 445, cysteine 259-cysteine 276, cysteine 285-cysteine 295, and cysteine 505-cysteine 527. N-linked (GlcNAc...) asparagine glycosylation is found at asparagine 83 and asparagine 101. Serine 191 functions as the Acyl-ester intermediate in the catalytic mechanism. The Ca(2+) site is built by aspartate 260, aspartate 263, alanine 265, aspartate 267, and isoleucine 269. Asparagine 286, asparagine 354, and asparagine 385 each carry an N-linked (GlcNAc...) asparagine glycan. Active-site charge relay system residues include aspartate 404 and histidine 444.

Belongs to the tannase family.

It is found in the secreted. The enzyme catalyses feruloyl-polysaccharide + H2O = ferulate + polysaccharide.. Its function is as follows. Involved in degradation of plant cell walls. Hydrolyzes the feruloyl-arabinose ester bond in arabinoxylans as well as the feruloyl-galactose and feruloyl-arabinose ester bonds in pectin. The sequence is that of Probable feruloyl esterase B-1 (faeB-1) from Aspergillus fumigatus (strain CBS 144.89 / FGSC A1163 / CEA10) (Neosartorya fumigata).